Here is a 780-residue protein sequence, read N- to C-terminus: Semaphorin-3G (780 aa).

The signal sequence occupies residues 1–22 (MDPSAWAICCLLGSLLFHVGIP). Residues 32-519 (RLRLSYRDLL…SPLGVARLQL (488 aa)) form the Sema domain. Asn-44 is a glycosylation site (N-linked (GlcNAc...) asparagine). Cys-105 and Cys-116 are disulfide-bonded. An N-linked (GlcNAc...) asparagine glycan is attached at Asn-127. Cystine bridges form between Cys-134–Cys-143, Cys-270–Cys-382, Cys-294–Cys-342, Cys-522–Cys-540, and Cys-603–Cys-655. In terms of domain architecture, Ig-like C2-type spans 569-671 (PAVQCLGQGQ…FSQTVVRFAL (103 aa)). The N-linked (GlcNAc...) asparagine glycan is linked to Asn-652.

The protein belongs to the semaphorin family. In terms of tissue distribution, highly expressed in lung and kidney. Weakly expressed in brain.

The protein localises to the secreted. In terms of biological role, has chemorepulsive activities for sympathetic axons. Ligand of NRP2. This chain is Semaphorin-3G (Sema3g), found in Mus musculus (Mouse).